Here is a 285-residue protein sequence, read N- to C-terminus: Inositol oxygenase (285 aa).

Position 29 (Arg-29) interacts with substrate. Ser-33 carries the post-translational modification Phosphoserine. Asp-85 to Ser-87 provides a ligand contact to substrate. His-98, His-123, and Asp-124 together coordinate Fe cation. Residues Lys-127 and Gly-141–Asp-142 each bind substrate. Positions 194, 220, and 253 each coordinate Fe cation. Position 220–221 (His-220–Ser-221) interacts with substrate.

Belongs to the myo-inositol oxygenase family. Fe cation serves as cofactor. Kidney specific.

The protein localises to the cytoplasm. The catalysed reaction is myo-inositol + O2 = D-glucuronate + H2O + H(+). It participates in polyol metabolism; myo-inositol degradation into D-glucuronate; D-glucuronate from myo-inositol: step 1/1. This Homo sapiens (Human) protein is Inositol oxygenase (MIOX).